Reading from the N-terminus, the 66-residue chain is Ocellatin-PT2 (66 aa).

Residues 1–22 (MAFLKKSLFLVLFLGLVSLSIC) form the signal peptide. Positions 23–39 (DEEKRQDEDDDDDDDEE) are excised as a propeptide. Residue Val66 is modified to Valine amide.

In terms of tissue distribution, expressed by the skin glands.

Its subcellular location is the secreted. Functionally, has no antibacterial activity against Gram-negative bacteria E.coli ATCC 25922, S.pneumoniae ATCC 700603 and S.choleraesuis ATCC 14028 or against Gram-positive bacterium S.aureus ATCC 29313. Shows no hemolytic activity and no cytotoxicity. This is Ocellatin-PT2 from Leptodactylus pustulatus (Ceara white-lipped frog).